The chain runs to 371 residues: Probable dual-specificity RNA methyltransferase RlmN (371 aa).

Catalysis depends on Glu-113, which acts as the Proton acceptor. One can recognise a Radical SAM core domain in the interval 119–352; it reads QSWGNSVCVT…TTVRREMGGE (234 aa). A disulfide bridge links Cys-126 with Cys-357. Positions 133, 137, and 140 each coordinate [4Fe-4S] cluster. Residues 182–183, Ser-214, 237–239, and Asn-313 each bind S-adenosyl-L-methionine; these read GE and SLH. Cys-357 acts as the S-methylcysteine intermediate in catalysis.

It belongs to the radical SAM superfamily. RlmN family. The cofactor is [4Fe-4S] cluster.

Its subcellular location is the cytoplasm. It carries out the reaction adenosine(2503) in 23S rRNA + 2 reduced [2Fe-2S]-[ferredoxin] + 2 S-adenosyl-L-methionine = 2-methyladenosine(2503) in 23S rRNA + 5'-deoxyadenosine + L-methionine + 2 oxidized [2Fe-2S]-[ferredoxin] + S-adenosyl-L-homocysteine. The catalysed reaction is adenosine(37) in tRNA + 2 reduced [2Fe-2S]-[ferredoxin] + 2 S-adenosyl-L-methionine = 2-methyladenosine(37) in tRNA + 5'-deoxyadenosine + L-methionine + 2 oxidized [2Fe-2S]-[ferredoxin] + S-adenosyl-L-homocysteine. Functionally, specifically methylates position 2 of adenine 2503 in 23S rRNA and position 2 of adenine 37 in tRNAs. This is Probable dual-specificity RNA methyltransferase RlmN from Symbiobacterium thermophilum (strain DSM 24528 / JCM 14929 / IAM 14863 / T).